A 365-amino-acid chain; its full sequence is Phosphoserine aminotransferase (365 aa).

R40 is a binding site for L-glutamate. Pyridoxal 5'-phosphate contacts are provided by residues 74-75 (AS), F99, T155, D177, and Q200. The residue at position 201 (K201) is an N6-(pyridoxal phosphate)lysine. A pyridoxal 5'-phosphate-binding site is contributed by 241–242 (NT).

Belongs to the class-V pyridoxal-phosphate-dependent aminotransferase family. SerC subfamily. Homodimer. Pyridoxal 5'-phosphate is required as a cofactor.

Its subcellular location is the cytoplasm. It catalyses the reaction O-phospho-L-serine + 2-oxoglutarate = 3-phosphooxypyruvate + L-glutamate. It carries out the reaction 4-(phosphooxy)-L-threonine + 2-oxoglutarate = (R)-3-hydroxy-2-oxo-4-phosphooxybutanoate + L-glutamate. It participates in amino-acid biosynthesis; L-serine biosynthesis; L-serine from 3-phospho-D-glycerate: step 2/3. Its function is as follows. Catalyzes the reversible conversion of 3-phosphohydroxypyruvate to phosphoserine and of 3-hydroxy-2-oxo-4-phosphonooxybutanoate to phosphohydroxythreonine. This chain is Phosphoserine aminotransferase, found in Lactococcus lactis subsp. lactis (strain IL1403) (Streptococcus lactis).